Reading from the N-terminus, the 352-residue chain is Strictosidine synthase (352 aa).

The first 31 residues, 1 to 31, serve as a signal peptide directing secretion; that stretch reads MANFSESKSMMAVFFMFFLLLLSSSSSSSSS. N-linked (GlcNAc...) asparagine glycans are attached at residues asparagine 95 and asparagine 187.

It belongs to the strictosidine synthase family. Monomer.

The protein resides in the vacuole. It carries out the reaction 3alpha(S)-strictosidine + H2O = secologanin + tryptamine. The protein operates within alkaloid biosynthesis; 3alpha(S)-strictosidine biosynthesis; 3alpha(S)-strictosidine from secologanin and tryptamine: step 1/1. In terms of biological role, catalyzes the stereospecific condensation of tryptamine with secologanin to form strictosidine, the key intermediate of indole alkaloid biosynthesis. The sequence is that of Strictosidine synthase (STR1) from Catharanthus roseus (Madagascar periwinkle).